Here is a 300-residue protein sequence, read N- to C-terminus: Large ribosomal subunit protein bL9m (300 aa).

The protein belongs to the bacterial ribosomal protein bL9 family. Component of the mitochondrial large ribosomal subunit (mt-LSU). Mature N.crassa 74S mitochondrial ribosomes consist of a small (37S) and a large (54S) subunit. The 37S small subunit contains a 16S ribosomal RNA (16S mt-rRNA) and 32 different proteins. The 54S large subunit contains a 23S rRNA (23S mt-rRNA) and 42 different proteins.

The protein localises to the mitochondrion. Component of the mitochondrial ribosome (mitoribosome), a dedicated translation machinery responsible for the synthesis of mitochondrial genome-encoded proteins, including at least some of the essential transmembrane subunits of the mitochondrial respiratory chain. The mitoribosomes are attached to the mitochondrial inner membrane and translation products are cotranslationally integrated into the membrane. This is Large ribosomal subunit protein bL9m (mrpl50) from Neurospora crassa (strain ATCC 24698 / 74-OR23-1A / CBS 708.71 / DSM 1257 / FGSC 987).